The chain runs to 170 residues: Cathelicidin antimicrobial peptide (170 aa).

The signal sequence occupies residues 1-30 (MKTQRDGHSLGWWSLVLLLLGLVMPLAIIA). Positions 31–131 (QVLSYKEAVL…DISCDKDNKR (101 aa)) are cleaved as a propeptide — cathelin-like domain (CLD). 2 disulfides stabilise this stretch: cysteine 86–cysteine 97 and cysteine 108–cysteine 125. The tract at residues 150 to 162 (SKRIVQRIKDFLR) is active core.

The protein belongs to the cathelicidin family. Monomer, homodimer or homotrimer (in vitro). Oligomerizes as tetra- or hexamer in solution (in vitro). Post-translationally, proteolytically cleaved by proteinase PRTN3 into antibacterial peptide LL-37. Proteolytically cleaved by cathepsin CTSG and neutrophil elastase ELANE. Resistant to proteolytic degradation in solution, and when bound to both zwitterionic (mimicking mammalian membranes) and negatively charged membranes (mimicking bacterial membranes). In terms of processing, after secretion onto the skin surface, the CAMP gene product is processed by a serine protease-dependent mechanism into multiple novel antimicrobial peptides distinct from and shorter than cathelicidin LL-37. These peptides show enhanced antimicrobial action, acquiring the ability to kill skin pathogens such as S.aureus, E.coli and C.albicans. These peptides have lost the ability to stimulate CXCL8/IL8 release from keratinocytes. The peptides act synergistically, killing bacteria at lower concentrations when present together, and maintain activity at increased salt condition.

The protein resides in the secreted. It localises to the vesicle. Functionally, antimicrobial protein that is an integral component of the innate immune system. Binds to bacterial lipopolysaccharides (LPS). Acts via neutrophil N-formyl peptide receptors to enhance the release of CXCL2. Postsecretory processing generates multiple cathelicidin antimicrobial peptides with various lengths which act as a topical antimicrobial defense in sweat on skin. The unprocessed precursor form, cathelicidin antimicrobial peptide, inhibits the growth of Gram-negative E.coli and E.aerogenes with efficiencies comparable to that of the mature peptide LL-37 (in vitro). Antimicrobial peptide that is an integral component of the innate immune system. Binds to bacterial lipopolysaccharides (LPS). Causes membrane permeabilization by forming transmembrane pores (in vitro). Causes lysis of E.coli. Exhibits antimicrobial activity against Gram-negative bacteria such as P.aeruginosa, S.typhimurium, E.aerogenes, E.coli and P.syringae, Gram-positive bacteria such as L.monocytogenes, S.epidermidis, S.pyogenes and S.aureus, as well as vancomycin-resistant enterococci (in vitro). Exhibits antimicrobial activity against methicillin-resistant S.aureus, P.mirabilis, and C.albicans in low-salt media, but not in media containing 100 mM NaCl (in vitro). Forms chiral supramolecular assemblies with quinolone signal (PQS) molecules of P.aeruginosa, which may lead to interference of bacterial quorum signaling and perturbance of bacterial biofilm formation. May form supramolecular fiber-like assemblies on bacterial membranes. Induces cytokine and chemokine producation as well as TNF/TNFA and CSF2/GMCSF production in normal human keratinocytes. Exhibits hemolytic activity against red blood cells. In terms of biological role, exhibits antimicrobial activity against E.coli and B.megaterium (in vitro). The sequence is that of Cathelicidin antimicrobial peptide from Gorilla gorilla gorilla (Western lowland gorilla).